The primary structure comprises 75 residues: DNA-directed RNA polymerase subunit omega (75 aa).

This sequence belongs to the RNA polymerase subunit omega family. In terms of assembly, the RNAP catalytic core consists of 2 alpha, 1 beta, 1 beta' and 1 omega subunit. When a sigma factor is associated with the core the holoenzyme is formed, which can initiate transcription.

The catalysed reaction is RNA(n) + a ribonucleoside 5'-triphosphate = RNA(n+1) + diphosphate. Promotes RNA polymerase assembly. Latches the N- and C-terminal regions of the beta' subunit thereby facilitating its interaction with the beta and alpha subunits. The protein is DNA-directed RNA polymerase subunit omega of Lysinibacillus sphaericus (strain C3-41).